The sequence spans 418 residues: Glutamyl-tRNA reductase (418 aa).

Substrate is bound by residues threonine 57–arginine 60, serine 113, aspartate 118–glutamate 120, and glutamine 124. Catalysis depends on cysteine 58, which acts as the Nucleophile. An NADP(+)-binding site is contributed by glycine 193–glycine 198.

It belongs to the glutamyl-tRNA reductase family. As to quaternary structure, homodimer.

The enzyme catalyses (S)-4-amino-5-oxopentanoate + tRNA(Glu) + NADP(+) = L-glutamyl-tRNA(Glu) + NADPH + H(+). It functions in the pathway porphyrin-containing compound metabolism; protoporphyrin-IX biosynthesis; 5-aminolevulinate from L-glutamyl-tRNA(Glu): step 1/2. Catalyzes the NADPH-dependent reduction of glutamyl-tRNA(Glu) to glutamate 1-semialdehyde (GSA). This is Glutamyl-tRNA reductase from Christiangramia forsetii (strain DSM 17595 / CGMCC 1.15422 / KT0803) (Gramella forsetii).